A 223-amino-acid polypeptide reads, in one-letter code: Urease accessory protein UreF (223 aa).

This sequence belongs to the UreF family. In terms of assembly, ureD, UreF and UreG form a complex that acts as a GTP-hydrolysis-dependent molecular chaperone, activating the urease apoprotein by helping to assemble the nickel containing metallocenter of UreC. The UreE protein probably delivers the nickel.

It is found in the cytoplasm. Its function is as follows. Required for maturation of urease via the functional incorporation of the urease nickel metallocenter. In Pseudomonas paraeruginosa (strain DSM 24068 / PA7) (Pseudomonas aeruginosa (strain PA7)), this protein is Urease accessory protein UreF.